The sequence spans 290 residues: 4-hydroxybenzoate octaprenyltransferase (290 aa).

Transmembrane regions (helical) follow at residues Trp41–Met61, Trp89–Leu109, Phe133–Phe153, Gly158–Tyr178, Phe202–Ile224, and Trp269–Gly289.

The protein belongs to the UbiA prenyltransferase family. Mg(2+) serves as cofactor.

Its subcellular location is the cell inner membrane. The catalysed reaction is all-trans-octaprenyl diphosphate + 4-hydroxybenzoate = 4-hydroxy-3-(all-trans-octaprenyl)benzoate + diphosphate. Its pathway is cofactor biosynthesis; ubiquinone biosynthesis. In terms of biological role, catalyzes the prenylation of para-hydroxybenzoate (PHB) with an all-trans polyprenyl group. Mediates the second step in the final reaction sequence of ubiquinone-8 (UQ-8) biosynthesis, which is the condensation of the polyisoprenoid side chain with PHB, generating the first membrane-bound Q intermediate 3-octaprenyl-4-hydroxybenzoate. The chain is 4-hydroxybenzoate octaprenyltransferase from Burkholderia vietnamiensis (strain G4 / LMG 22486) (Burkholderia cepacia (strain R1808)).